Consider the following 161-residue polypeptide: Large ribosomal subunit protein uL15 (161 aa).

A disordered region spans residues methionine 1–glycine 43. Over residues arginine 21–glycine 37 the composition is skewed to gly residues.

As to quaternary structure, part of the 50S ribosomal subunit.

Functionally, binds to the 23S rRNA. This is Large ribosomal subunit protein uL15 from Rhodopseudomonas palustris (strain ATCC BAA-98 / CGA009).